A 390-amino-acid polypeptide reads, in one-letter code: Transforming growth factor beta-1 proprotein (390 aa).

The signal sequence occupies residues 1 to 29 (MPPSGLRLLPLLLPLLWLLVLTPGRPAAG). Residues 30–74 (LSTCKTIDMELVKRKRIEAIRGQILSKLRLASPPSQGEVPPGPLP) form a straightjacket domain region. The interval 75 to 271 (EAVLALYNST…ATPLERAQHL (197 aa)) is arm domain. N-linked (GlcNAc...) asparagine glycosylation is found at N82, N136, and N176. The bowtie tail stretch occupies residues 226-252 (DSRDNTLQVDINGLSSSRRGDLATIHG). Residues 244 to 246 (RGD) carry the Cell attachment site motif. 4 disulfide bridges follow: C285–C294, C293–C356, C322–C387, and C326–C389.

Belongs to the TGF-beta family. As to quaternary structure, homodimer; disulfide-linked. Interacts with the serine proteases, HTRA1 and HTRA3: the interaction with either inhibits TGFB1-mediated signaling and the HTRA protease activity is required for this inhibition. May interact with THSD4; this interaction may lead to sequestration by FBN1 microfibril assembly and attenuation of TGFB signaling. Interacts with CD109, DPT and ASPN. Interacts with EFEMP2. Interacts with TSKU; the interaction contributes to regulation of the hair cycle. Interacts with TGFBR3. In terms of assembly, homodimer; disulfide-linked. Interacts with transforming growth factor beta-1 (TGF-beta-1) chain; interaction is non-covalent and maintains TGF-beta-1 in a latent state; each latency-associated peptide (LAP) monomer interacts with TGF-beta-1 in the other monomer. Interacts with LTBP1; leading to regulation of TGF-beta-1 activation. Interacts with LRRC32/GARP; leading to regulation of TGF-beta-1 activation on the surface of activated regulatory T-cells (Tregs). Interacts with LRRC33/NRROS; leading to regulation of TGF-beta-1 activation in macrophages and microglia. Interacts (via cell attachment site) with integrins ITGAV and ITGB6 (ITGAV:ITGB6), leading to release of the active TGF-beta-1. Interacts with NREP; the interaction results in a decrease in TGFB1 autoinduction. Interacts with HSP90AB1; inhibits latent TGFB1 activation. Homodimer; disulfide-linked. Interacts with TGF-beta receptors (TGFBR1 and TGFBR2), leading to signal transduction. Transforming growth factor beta-1 proprotein: The precursor proprotein is cleaved in the Golgi apparatus by FURIN to form Transforming growth factor beta-1 (TGF-beta-1) and Latency-associated peptide (LAP) chains, which remain non-covalently linked, rendering TGF-beta-1 inactive. In terms of processing, N-glycosylated. Deglycosylation leads to activation of Transforming growth factor beta-1 (TGF-beta-1); mechanisms triggering deglycosylation-driven activation of TGF-beta-1 are however unclear.

It localises to the secreted. It is found in the extracellular space. The protein localises to the extracellular matrix. Its function is as follows. Transforming growth factor beta-1 proprotein: Precursor of the Latency-associated peptide (LAP) and Transforming growth factor beta-1 (TGF-beta-1) chains, which constitute the regulatory and active subunit of TGF-beta-1, respectively. Required to maintain the Transforming growth factor beta-1 (TGF-beta-1) chain in a latent state during storage in extracellular matrix. Associates non-covalently with TGF-beta-1 and regulates its activation via interaction with 'milieu molecules', such as LTBP1, LRRC32/GARP and LRRC33/NRROS, that control activation of TGF-beta-1. Interaction with LRRC33/NRROS regulates activation of TGF-beta-1 in macrophages and microglia. Interaction with LRRC32/GARP controls activation of TGF-beta-1 on the surface of activated regulatory T-cells (Tregs). Interaction with integrins (ITGAV:ITGB6 or ITGAV:ITGB8) results in distortion of the Latency-associated peptide chain and subsequent release of the active TGF-beta-1. In terms of biological role, multifunctional protein that regulates the growth and differentiation of various cell types and is involved in various processes, such as normal development, immune function, microglia function and responses to neurodegeneration. Activation into mature form follows different steps: following cleavage of the proprotein in the Golgi apparatus, Latency-associated peptide (LAP) and Transforming growth factor beta-1 (TGF-beta-1) chains remain non-covalently linked rendering TGF-beta-1 inactive during storage in extracellular matrix. At the same time, LAP chain interacts with 'milieu molecules', such as LTBP1, LRRC32/GARP and LRRC33/NRROS that control activation of TGF-beta-1 and maintain it in a latent state during storage in extracellular milieus. TGF-beta-1 is released from LAP by integrins (ITGAV:ITGB6 or ITGAV:ITGB8): integrin-binding to LAP stabilizes an alternative conformation of the LAP bowtie tail and results in distortion of the LAP chain and subsequent release of the active TGF-beta-1. Once activated following release of LAP, TGF-beta-1 acts by binding to TGF-beta receptors (TGFBR1 and TGFBR2), which transduce signal. While expressed by many cells types, TGF-beta-1 only has a very localized range of action within cell environment thanks to fine regulation of its activation by Latency-associated peptide chain (LAP) and 'milieu molecules'. Plays an important role in bone remodeling: acts as a potent stimulator of osteoblastic bone formation, causing chemotaxis, proliferation and differentiation in committed osteoblasts. Can promote either T-helper 17 cells (Th17) or regulatory T-cells (Treg) lineage differentiation in a concentration-dependent manner. At high concentrations, leads to FOXP3-mediated suppression of RORC and down-regulation of IL-17 expression, favoring Treg cell development. At low concentrations in concert with IL-6 and IL-21, leads to expression of the IL-17 and IL-23 receptors, favoring differentiation to Th17 cells. Stimulates sustained production of collagen through the activation of CREB3L1 by regulated intramembrane proteolysis (RIP). Mediates SMAD2/3 activation by inducing its phosphorylation and subsequent translocation to the nucleus. Positively regulates odontoblastic differentiation in dental papilla cells, via promotion of IPO7-mediated translocation of phosphorylated SMAD2 to the nucleus and subsequent transcription of target genes. Can induce epithelial-to-mesenchymal transition (EMT) and cell migration in various cell types. The chain is Transforming growth factor beta-1 proprotein (TGFB1) from Mustela putorius furo (European domestic ferret).